A 211-amino-acid chain; its full sequence is MGKFEVLDHPLIQHKLTMIRDKRVGTKVFRETVKEISTLMAYEVSRNMPLKDVEVETPIAKTTQKELAGKKVAIIPILRAGLGMVDGMTELIPAAKIGFIGMYRDEETLKPHEYFVKLPNDITERQLFIVDPMLATGGSAVMAIEALKKRGCQEKNMKFACLVAAPEGVKAVQEAFPDVDIYTAGLDERLNEDGYIVPGLGDAGDRLFGTK.

5-phospho-alpha-D-ribose 1-diphosphate-binding positions include arginine 79, arginine 104, and aspartate 131 to serine 139. Uracil is bound by residues isoleucine 196 and glycine 201–alanine 203. Residue aspartate 202 participates in 5-phospho-alpha-D-ribose 1-diphosphate binding.

The protein belongs to the UPRTase family. Mg(2+) is required as a cofactor.

It carries out the reaction UMP + diphosphate = 5-phospho-alpha-D-ribose 1-diphosphate + uracil. Its pathway is pyrimidine metabolism; UMP biosynthesis via salvage pathway; UMP from uracil: step 1/1. Allosterically activated by GTP. In terms of biological role, catalyzes the conversion of uracil and 5-phospho-alpha-D-ribose 1-diphosphate (PRPP) to UMP and diphosphate. This Limosilactobacillus fermentum (strain NBRC 3956 / LMG 18251) (Lactobacillus fermentum) protein is Uracil phosphoribosyltransferase.